The following is a 276-amino-acid chain: Elongation factor Ts (276 aa).

The interval 81–84 (TDFV) is involved in Mg(2+) ion dislocation from EF-Tu.

The protein belongs to the EF-Ts family.

The protein localises to the cytoplasm. Functionally, associates with the EF-Tu.GDP complex and induces the exchange of GDP to GTP. It remains bound to the aminoacyl-tRNA.EF-Tu.GTP complex up to the GTP hydrolysis stage on the ribosome. The protein is Elongation factor Ts of Leifsonia xyli subsp. xyli (strain CTCB07).